A 384-amino-acid polypeptide reads, in one-letter code: DNA dC-&gt;dU-editing enzyme APOBEC-3G (384 aa).

Residues 1-60 (MKPHFRNPVERMYQDTFSDNFYNRPILSHRNTVWLCYEVKTKGPSRPPLDAKIFRGQVYS) form an essential for cytoplasmic localization region. CMP/dCMP-type deaminase domains lie at 29–138 (HRNT…LRSL) and 214–328 (GRHE…LRTL). A Phosphothreonine; by PKA modification is found at Thr32. Residues His65, Cys97, and Cys100 each contribute to the Zn(2+) site. The necessary for homooligomerization stretch occupies residues 209–336 (ELWVRGRHET…TLAKAGAKIS (128 aa)). Residues 213-215 (RGR) are interaction with DNA. Thr218 carries the phosphothreonine; by PKA and CAMK2 modification. His257 contacts Zn(2+). The Proton donor role is filled by Glu259. Zn(2+) is bound by residues Cys288 and Cys291. Residues 313–320 (RIYDDQGR) are interaction with DNA.

The protein belongs to the cytidine and deoxycytidylate deaminase family. In terms of assembly, homodimer. Homooligomer. Can bind RNA to form ribonucleoprotein complexes of high-molecular-mass (HMM) or low-molecular-mass (LMM). HMM is inactive and heterogeneous in protein composition because of binding nonselectively to cellular RNAs, which in turn are associated with variety of cellular proteins. The LMM form which is enzymatically active has few or no RNAs associated. Its ability to form homooligomer is distinct from its ability to assemble into HMM. Interacts with APOBEC3B, APOBEC3F, MOV10, AGO2, EIF4E, EIF4ENIF1, DCP2 and DDX6 in an RNA-dependent manner. Interacts with AGO1, AGO3 and PKA/PRKACA. Requires Zn(2+) as cofactor.

It localises to the cytoplasm. Its subcellular location is the nucleus. The protein resides in the P-body. The enzyme catalyses a 2'-deoxycytidine in single-stranded DNA + H2O + H(+) = a 2'-deoxyuridine in single-stranded DNA + NH4(+). In terms of biological role, DNA deaminase (cytidine deaminase) which acts as an inhibitor of retrovirus replication and retrotransposon mobility via deaminase-dependent and -independent mechanisms. Exhibits antiviral activity against vif-deficient: HIV-1 and simian immunodeficiency viruses (SIVs) and also against simian foamy virus (SFV). After the penetration of retroviral nucleocapsids into target cells of infection and the initiation of reverse transcription, it can induce the conversion of cytosine to uracil in the minus-sense single-strand viral DNA, leading to G-to-A hypermutations in the subsequent plus-strand viral DNA. The resultant detrimental levels of mutations in the proviral genome, along with a deamination-independent mechanism that works prior to the proviral integration, together exert efficient antiretroviral effects in infected target cells. Selectively targets single-stranded DNA and does not deaminate double-stranded DNA or single- or double-stranded RNA. May inhibit the mobility of LTR retrotransposons. This chain is DNA dC-&gt;dU-editing enzyme APOBEC-3G (APOBEC3G), found in Pan troglodytes (Chimpanzee).